The chain runs to 848 residues: Translation initiation factor IF-2 (848 aa).

Positions 1-20 are disordered; it reads MNESKGAVDSGLMSGKTERT. The tr-type G domain occupies 346-516; it reads PRAPVVTVMG…LLMAELLELK (171 aa). The tract at residues 355–362 is G1; it reads GHVDHGKT. 355-362 lines the GTP pocket; sequence GHVDHGKT. Positions 380-384 are G2; sequence GITQH. The G3 stretch occupies residues 402-405; sequence DTPG. GTP is bound by residues 402–406 and 456–459; these read DTPGH and NKID. The segment at 456–459 is G4; sequence NKID. Positions 492-494 are G5; the sequence is SAK.

This sequence belongs to the TRAFAC class translation factor GTPase superfamily. Classic translation factor GTPase family. IF-2 subfamily.

It localises to the cytoplasm. Its function is as follows. One of the essential components for the initiation of protein synthesis. Protects formylmethionyl-tRNA from spontaneous hydrolysis and promotes its binding to the 30S ribosomal subunits. Also involved in the hydrolysis of GTP during the formation of the 70S ribosomal complex. The protein is Translation initiation factor IF-2 of Ehrlichia canis (strain Jake).